A 232-amino-acid polypeptide reads, in one-letter code: Small ribosomal subunit protein uS3 (232 aa).

The KH type-2 domain occupies 39-107 (VRQFLTKELS…PAQINIAEVR (69 aa)).

This sequence belongs to the universal ribosomal protein uS3 family. In terms of assembly, part of the 30S ribosomal subunit. Forms a tight complex with proteins S10 and S14.

Functionally, binds the lower part of the 30S subunit head. Binds mRNA in the 70S ribosome, positioning it for translation. This Sodalis glossinidius (strain morsitans) protein is Small ribosomal subunit protein uS3.